The following is a 271-amino-acid chain: Acetylglutamate kinase (271 aa).

Substrate-binding positions include 41–42, Arg63, and Asn166; that span reads GG.

Belongs to the acetylglutamate kinase family. ArgB subfamily.

The protein resides in the cytoplasm. The catalysed reaction is N-acetyl-L-glutamate + ATP = N-acetyl-L-glutamyl 5-phosphate + ADP. Its pathway is amino-acid biosynthesis; L-arginine biosynthesis; N(2)-acetyl-L-ornithine from L-glutamate: step 2/4. Functionally, catalyzes the ATP-dependent phosphorylation of N-acetyl-L-glutamate. The polypeptide is Acetylglutamate kinase (Anaeromyxobacter sp. (strain Fw109-5)).